A 505-amino-acid chain; its full sequence is uncharacterized protein (505 aa).

The N-terminal stretch at 1–22 (MAILKSALVGFICFLHFFIVNA) is a signal peptide. N-linked (GlcNAc...) asparagine glycosylation is found at N25 and N114. Helical transmembrane passes span 181–201 (LFLNPILLAINCLIGIWWSFI), 216–236 (ISGVVALSIVCTMVSTGYFYF), 266–286 (FLLLIVSLGYSIVVPSLGSLL), 291–311 (ILAGLQFVSSCFFLSSLFISP), and 318–338 (VILFAAPVFLITLFAMFLWIV). N342 carries N-linked (GlcNAc...) asparagine glycosylation. Transmembrane regions (helical) follow at residues 365 to 385 (IVICFGIVAYASIVAANAILI) and 400 to 420 (LLWFLNYGYTDILVLILMLTI). A glycan (N-linked (GlcNAc...) asparagine) is linked at N454.

Belongs to the LU7TM family.

It localises to the membrane. This is an uncharacterized protein from Schizosaccharomyces pombe (strain 972 / ATCC 24843) (Fission yeast).